A 309-amino-acid chain; its full sequence is Probable nitrogen assimilation transcriptional activator (309 aa).

Residues 1–57 (MRLEQLQAFLKVAELGSFQQAALQSEVTQSTISRQIQGLESALKCQLFHRGAQAKLT) enclose the HTH lysR-type domain. Positions 18-38 (FQQAALQSEVTQSTISRQIQG) form a DNA-binding region, H-T-H motif.

This sequence belongs to the LysR transcriptional regulatory family.

Functionally, seems to regulate utilization of fixed nitrogen by controlling the expression of a certain gene(s) involved in nitrogen metabolism. This is Probable nitrogen assimilation transcriptional activator (ntcB) from Synechocystis sp. (strain ATCC 27184 / PCC 6803 / Kazusa).